Here is a 35-residue protein sequence, read N- to C-terminus: Turgencin-B (35 aa).

2 positions are modified to methionine sulfoxide: M5 and M9. Disulfide bonds link C7-C31, C11-C27, and C16-C24. Residue G35 is modified to Glycine amide.

In terms of processing, oxidation likely reduces antimicrobial activity against Gram-positive bacteria and Gram-negative bacteria.

The protein resides in the secreted. Has antimicrobial activity against Gram-positive bacteria (C.glutamicum ATCC 13032 (MIC=1.6 uM) and B.subtilis ATCC 23857 (MIC=1.6 uM)) and Gram-negative bacteria (E.coli ATCC 25922 (MIC=12.5 uM) and P.aeruginosa ATCC 27853 (MIC=25.0 uM)). Displays very low activity against the Gram-positive bacteria S.aureus ATCC 9144 (MIC&gt;100 uM). The sequence is that of Turgencin-B from Synoicum turgens (Colonial ascidian).